Reading from the N-terminus, the 122-residue chain is Large ribosomal subunit protein uL14 (122 aa).

This sequence belongs to the universal ribosomal protein uL14 family. Part of the 50S ribosomal subunit. Forms a cluster with proteins L3 and L19. In the 70S ribosome, L14 and L19 interact and together make contacts with the 16S rRNA in bridges B5 and B8.

Its function is as follows. Binds to 23S rRNA. Forms part of two intersubunit bridges in the 70S ribosome. In Caldanaerobacter subterraneus subsp. tengcongensis (strain DSM 15242 / JCM 11007 / NBRC 100824 / MB4) (Thermoanaerobacter tengcongensis), this protein is Large ribosomal subunit protein uL14.